The sequence spans 97 residues: YcgL domain-containing protein PST_1364 (97 aa).

The YcgL domain maps to 3–87 (LICSIYKSPR…AEDEYIEHLP (85 aa)).

The sequence is that of YcgL domain-containing protein PST_1364 from Stutzerimonas stutzeri (strain A1501) (Pseudomonas stutzeri).